A 205-amino-acid chain; its full sequence is Ribonuclease HII (205 aa).

The region spanning 16–205 is the RNase H type-2 domain; that stretch reads VSEVGIDEVG…KSFLKKSKLI (190 aa). Positions 22, 23, and 118 each coordinate a divalent metal cation.

The protein belongs to the RNase HII family. Mn(2+) serves as cofactor. The cofactor is Mg(2+).

It localises to the cytoplasm. The catalysed reaction is Endonucleolytic cleavage to 5'-phosphomonoester.. In terms of biological role, endonuclease that specifically degrades the RNA of RNA-DNA hybrids. In Prochlorococcus marinus (strain AS9601), this protein is Ribonuclease HII.